The chain runs to 388 residues: Acetate kinase (388 aa).

A Mg(2+)-binding site is contributed by Asn-7. Position 14 (Lys-14) interacts with ATP. Arg-76 contacts substrate. Asp-133 serves as the catalytic Proton donor/acceptor. Residues 193–197, 267–269, and 315–319 each bind ATP; these read HLGNG, DMR, and GIGEN. Residue Glu-374 coordinates Mg(2+).

The protein belongs to the acetokinase family. As to quaternary structure, homodimer. Requires Mg(2+) as cofactor. Mn(2+) serves as cofactor.

Its subcellular location is the cytoplasm. The catalysed reaction is acetate + ATP = acetyl phosphate + ADP. The protein operates within metabolic intermediate biosynthesis; acetyl-CoA biosynthesis; acetyl-CoA from acetate: step 1/2. Functionally, catalyzes the formation of acetyl phosphate from acetate and ATP. Can also catalyze the reverse reaction. The polypeptide is Acetate kinase (Micrococcus luteus (strain ATCC 4698 / DSM 20030 / JCM 1464 / CCM 169 / CCUG 5858 / IAM 1056 / NBRC 3333 / NCIMB 9278 / NCTC 2665 / VKM Ac-2230) (Micrococcus lysodeikticus)).